The chain runs to 404 residues: MNCEHFGICGGCTNIQDYSTQLQAKHNLTLQEFQSFLDTKSKNFQYPTNPLAIEVFASPQEGFRARAEFRFSHVFQNKSGLDFAMNAFGYNHRVPIKKCPILLPTLQDIMPLLLHYLNTYDLLNHKLYACNLLSSLQNEIIITLIYHKSLDSHWESLALKIQKELEYTLNTNIHIIGRSKNHKHILSNDIICEHLTLFANTPKERTYTFFKQESRFCQPNPFINTQMLEFIVSALSSIYTPQTPCDMLELYCGSGNFTIPLASIFRHIFATEVVKSAITLLQKNMAKNNIENIIPARLNAFESIQALRKERVFFRLKNIDLDAFAFDCVLIDPPRSGVGEEEVLYFLQNFNTIIYVSCNPHTLLNDLRILSQSHYVMRFGLFDQFPHTYHRECIVILRKSNKIL.

The S-adenosyl-L-methionine site is built by Gln218, Tyr251, Asn256, Glu272, and Asp332. Cys358 serves as the catalytic Nucleophile. Catalysis depends on Glu392, which acts as the Proton acceptor.

It belongs to the class I-like SAM-binding methyltransferase superfamily. RNA M5U methyltransferase family. TrmA subfamily.

It carries out the reaction uridine(54) in tRNA + S-adenosyl-L-methionine = 5-methyluridine(54) in tRNA + S-adenosyl-L-homocysteine + H(+). The enzyme catalyses uridine(341) in tmRNA + S-adenosyl-L-methionine = 5-methyluridine(341) in tmRNA + S-adenosyl-L-homocysteine + H(+). In terms of biological role, dual-specificity methyltransferase that catalyzes the formation of 5-methyluridine at position 54 (m5U54) in all tRNAs, and that of position 341 (m5U341) in tmRNA (transfer-mRNA). This chain is tRNA/tmRNA (uracil-C(5))-methyltransferase, found in Helicobacter hepaticus (strain ATCC 51449 / 3B1).